The sequence spans 149 residues: Detocs response regulatory protein DtcB (149 aa).

In terms of domain architecture, Response regulatory spans 1-134; the sequence is MILIVEDDAH…DIEACYYDHN (134 aa). The residue at position 53 (D53) is a 4-aspartylphosphate.

Post-translationally, probably phosphorylated by DtcA.

In terms of biological role, possible phosphate scavenger member of the two-component regulatory system Detocs that confers resistance to bacteriophage. When the system (DtcA-DtcB-DtcC) is expressed in a susceptible E.coli (strain MG1655) it confers resistance to bacteriophages T2, T4, T5, T6 and SECphi27. Detocs inhibits T5 infection leading to growth arrest but not complete cell lysis, during SECphi27 infection leads to cell lysis. Overexpression of this protein along with the intact Detocs locus cancels T5 immunity; when the phosphate-receiving Asp-53 is mutated to Ala in this protein, immunity is restored. DtcA probably autophosphorylates upon sensing viral infection, and subsequently transfers the phosphate signal to DtcC which activates it, leading to an antiviral defense; DtcB (this subunit) may scavenge phosphorylation signals from accidental activation of DtcA. In Vibrio alginolyticus, this protein is Detocs response regulatory protein DtcB.